Here is a 385-residue protein sequence, read N- to C-terminus: Urotensin-2 receptor (385 aa).

Residues Met-1 to Ile-53 lie on the Extracellular side of the membrane. 2 N-linked (GlcNAc...) asparagine glycosylation sites follow: Asn-28 and Asn-32. Residues Gly-54–Cys-76 form a helical membrane-spanning segment. Residues Arg-77–Tyr-86 are Cytoplasmic-facing. The helical transmembrane segment at Val-87–Thr-112 threads the bilayer. At Lys-113–Arg-123 the chain is on the extracellular side. Cys-122 and Cys-198 are joined by a disulfide. Residues Val-124–Ser-145 form a helical membrane-spanning segment. Residues Glu-146 to Lys-166 lie on the Cytoplasmic side of the membrane. A helical membrane pass occupies residues Leu-167–Leu-185. Residues Ala-186–Arg-208 lie on the Extracellular side of the membrane. The helical transmembrane segment at Thr-209–Ile-231 threads the bilayer. The Cytoplasmic segment spans residues Arg-232–Leu-257. A helical transmembrane segment spans residues Tyr-258–Tyr-283. Topologically, residues His-284–Asn-298 are extracellular. A helical transmembrane segment spans residues Tyr-299 to Thr-320. Topologically, residues Lys-321–Val-385 are cytoplasmic.

It belongs to the G-protein coupled receptor 1 family.

It localises to the cell membrane. Functionally, high affinity receptor for urotensin-2 and urotensin-2B. The activity of this receptor is mediated by a G-protein that activate a phosphatidylinositol-calcium second messenger system. In Mus musculus (Mouse), this protein is Urotensin-2 receptor (Uts2r).